The primary structure comprises 456 residues: Maturase-like protein 1 (456 aa).

To group II intron maturases.

The protein localises to the plastid. Functionally, could be required for group III intron excision. This is Maturase-like protein 1 (mat1) from Euglena longa (Euglenophycean alga).